The following is a 294-amino-acid chain: 4-hydroxy-tetrahydrodipicolinate synthase (294 aa).

Threonine 46 contributes to the pyruvate binding site. The Proton donor/acceptor role is filled by tyrosine 134. Lysine 163 (schiff-base intermediate with substrate) is an active-site residue. Isoleucine 205 is a binding site for pyruvate.

Belongs to the DapA family. Homotetramer; dimer of dimers.

The protein resides in the cytoplasm. The enzyme catalyses L-aspartate 4-semialdehyde + pyruvate = (2S,4S)-4-hydroxy-2,3,4,5-tetrahydrodipicolinate + H2O + H(+). It participates in amino-acid biosynthesis; L-lysine biosynthesis via DAP pathway; (S)-tetrahydrodipicolinate from L-aspartate: step 3/4. Catalyzes the condensation of (S)-aspartate-beta-semialdehyde [(S)-ASA] and pyruvate to 4-hydroxy-tetrahydrodipicolinate (HTPA). This chain is 4-hydroxy-tetrahydrodipicolinate synthase, found in Clostridium tetani (strain Massachusetts / E88).